The sequence spans 441 residues: Ribulose bisphosphate carboxylase large chain (441 aa).

Position 5 is an N6,N6,N6-trimethyllysine (lysine 5). Substrate is bound by residues asparagine 114 and threonine 164. Residue lysine 166 is the Proton acceptor of the active site. Lysine 168 contributes to the substrate binding site. Lysine 192, aspartate 194, and glutamate 195 together coordinate Mg(2+). An N6-carboxylysine modification is found at lysine 192. Histidine 285 acts as the Proton acceptor in catalysis. Positions 286, 318, and 370 each coordinate substrate.

It belongs to the RuBisCO large chain family. Type I subfamily. In terms of assembly, heterohexadecamer of 8 large chains and 8 small chains; disulfide-linked. The disulfide link is formed within the large subunit homodimers. It depends on Mg(2+) as a cofactor. Post-translationally, the disulfide bond which can form in the large chain dimeric partners within the hexadecamer appears to be associated with oxidative stress and protein turnover.

It localises to the plastid. The protein localises to the chloroplast. The catalysed reaction is 2 (2R)-3-phosphoglycerate + 2 H(+) = D-ribulose 1,5-bisphosphate + CO2 + H2O. It catalyses the reaction D-ribulose 1,5-bisphosphate + O2 = 2-phosphoglycolate + (2R)-3-phosphoglycerate + 2 H(+). Functionally, ruBisCO catalyzes two reactions: the carboxylation of D-ribulose 1,5-bisphosphate, the primary event in carbon dioxide fixation, as well as the oxidative fragmentation of the pentose substrate in the photorespiration process. Both reactions occur simultaneously and in competition at the same active site. This chain is Ribulose bisphosphate carboxylase large chain, found in Glycyrrhiza echinata (Licorice).